The sequence spans 388 residues: Angiopoietin-related protein 5 (388 aa).

Positions 1–25 (MMSPSQASLLFLNVCIFICGEAVQG) are cleaved as a signal peptide. N-linked (GlcNAc...) asparagine glycosylation occurs at asparagine 53. A coiled-coil region spans residues 98 to 123 (LRNMMDEQQASLDYLSNQVNELMNRV). One can recognise a Fibrinogen C-terminal domain in the interval 141-383 (RPVQSHGLDC…SVSMKIRRMY (243 aa)). An N-linked (GlcNAc...) asparagine glycan is attached at asparagine 238. Intrachain disulfides connect cysteine 310/cysteine 314 and cysteine 324/cysteine 338. N-linked (GlcNAc...) asparagine glycosylation occurs at asparagine 329.

In terms of tissue distribution, mainly expressed in adult heart.

Its subcellular location is the secreted. The protein is Angiopoietin-related protein 5 (ANGPTL5) of Homo sapiens (Human).